A 337-amino-acid chain; its full sequence is Viral cathepsin (337 aa).

Positions 1-16 are cleaved as a signal peptide; it reads MNKLLILFLLLNAALT. A propeptide spans 17-126 (activation peptide); the sequence is RQDNHASANN…VVDGPAQRQR (110 aa). 3 cysteine pairs are disulfide-bonded: cysteine 147/cysteine 188, cysteine 181/cysteine 221, and cysteine 276/cysteine 324. Cysteine 150 is a catalytic residue. Catalysis depends on residues histidine 283 and asparagine 303.

It belongs to the peptidase C1 family. Synthesized as an inactive proenzyme and activated by proteolytic removal of the inhibitory propeptide.

It carries out the reaction Endopeptidase of broad specificity, hydrolyzing substrates of both cathepsin L and cathepsin B.. Cysteine protease that plays an essential role in host liquefaction to facilitate horizontal transmission of the virus. May participate in the degradation of foreign protein expressed by the baculovirus system. The sequence is that of Viral cathepsin (VCATH) from Lepidoptera (butterflies and moths).